The following is a 1402-amino-acid chain: Roundabout homolog 3 (1402 aa).

A signal peptide spans 1–20; sequence MLRYLLKTLLQMNLFADSLA. Residues 21–891 are Extracellular-facing; that stretch reads RDISNSSELL…ERLAKVLRKP (871 aa). Asn-25, Asn-34, and Asn-53 each carry an N-linked (GlcNAc...) asparagine glycan. Ig-like C2-type domains are found at residues 64 to 160, 166 to 253, 258 to 342, 347 to 440, and 450 to 531; these read PRIV…ASLE, DDFR…AELV, PSFL…GSLS, PQFV…ALLE, and PPII…GEAT. Cys-85 and Cys-143 are disulfide-bonded. The N-linked (GlcNAc...) asparagine glycan is linked to Asn-156. Cystine bridges form between Cys-187-Cys-236 and Cys-279-Cys-326. N-linked (GlcNAc...) asparagine glycosylation is found at Asn-355, Asn-363, Asn-410, Asn-459, and Asn-503. Cys-368 and Cys-424 are oxidised to a cystine. Cysteines 472 and 521 form a disulfide. Disordered stretches follow at residues 540–561 and 639–662; these read EDWG…PPSQ and EPSP…EDPW. Over residues 543–552 the composition is skewed to low complexity; the sequence is GASPGPATGP. 3 Fibronectin type-III domains span residues 558-652, 672-766, and 771-869; these read PPSQ…TQDS, AVRM…IPEE, and PPQG…FPPA. Positions 646–655 are enriched in polar residues; that stretch reads PVQTQDSSLS. 3 N-linked (GlcNAc...) asparagine glycosylation sites follow: Asn-784, Asn-813, and Asn-820. Residues 892–912 traverse the membrane as a helical segment; that stretch reads AFLAGSSAACGALLLGFCAAL. Topologically, residues 913–1402 are cytoplasmic; that stretch reads YRRQKQRKEL…PGRNRREEPR (490 aa). 3 disordered regions span residues 965-989, 1032-1307, and 1340-1402; these read SWPH…NPDP, FHGG…VVQA, and GRPS…EEPR. 2 stretches are compositionally biased toward polar residues: residues 1038 to 1049 and 1142 to 1152; these read QHSSGDPSTWSQ and PSPTSSYGQQS. Over residues 1158–1169 the composition is skewed to pro residues; sequence PSPPDPPQPPTD. 2 stretches are compositionally biased toward low complexity: residues 1178-1191 and 1215-1228; these read RRVP…LSVS and ASPS…SSAP. Basic residues predominate over residues 1243–1254; that stretch reads HGHRARIRKKPK. Ser-1263 is subject to Phosphoserine. Basic and acidic residues predominate over residues 1294-1304; it reads LERERSGERRV. The segment covering 1346-1357 has biased composition (polar residues); it reads SHGQGTSTCSTA. Positions 1358–1371 are enriched in low complexity; the sequence is GSNSSRGSNSSRGS.

This sequence belongs to the immunoglobulin superfamily. ROBO family. In terms of assembly, interacts (via Fibronectin type-III 1 domain) with NELL2 (via the EGF domains) with a 3:3 stoichiometry; this interaction promotes oligomerization of ROBO3 resulting in the repulsion of commissural axons in the midline. In terms of tissue distribution, detected in embryonal spinal cord and hindbrain.

The protein localises to the membrane. Its function is as follows. Receptor involved in axon guidance during development. Acts as a multifunctional regulator of pathfinding that simultaneously mediates NELL2 repulsion, inhibits SLIT repulsion, and facilitates Netrin-1/NTN1 attraction. In spinal cord development plays a role in guiding commissural axons probably by preventing premature sensitivity to Slit proteins thus inhibiting Slit signaling through ROBO1/ROBO2. Binding OF NELL2 to the receptor ROBO3 promotes oligomerization of ROBO3, resulting in the repulsion of commissural axons in the midline. ROBO3 also indirectly boosts axon attraction to NTN1 without interacting with NTN1 itself. Functionally, mediates NELL2 premature repulsion of commissural axons during midline crossing. In terms of biological role, after midline crossing by the commissural axons, may, in concert with ROBO1 and ROBO2, prevent midline recrossing. Does not mediate NELL2 signaling. This Mus musculus (Mouse) protein is Roundabout homolog 3.